An 815-amino-acid chain; its full sequence is DNA gyrase subunit B (815 aa).

The disordered stretch occupies residues 1–21 (MEKTPATGSAVAPPPVEYGTD). A Toprim domain is found at 430-545 (SELYIVEGDS…AISTSRSRRS (116 aa)). The Mg(2+) site is built by E436, D509, and D511.

Belongs to the type II topoisomerase GyrB family. As to quaternary structure, heterotetramer, composed of two GyrA and two GyrB chains. In the heterotetramer, GyrA contains the active site tyrosine that forms a transient covalent intermediate with DNA, while GyrB binds cofactors and catalyzes ATP hydrolysis. Requires Mg(2+) as cofactor. Mn(2+) is required as a cofactor. The cofactor is Ca(2+).

Its subcellular location is the cytoplasm. It carries out the reaction ATP-dependent breakage, passage and rejoining of double-stranded DNA.. Its function is as follows. A type II topoisomerase that negatively supercoils closed circular double-stranded (ds) DNA in an ATP-dependent manner to modulate DNA topology and maintain chromosomes in an underwound state. Negative supercoiling favors strand separation, and DNA replication, transcription, recombination and repair, all of which involve strand separation. Also able to catalyze the interconversion of other topological isomers of dsDNA rings, including catenanes and knotted rings. Type II topoisomerases break and join 2 DNA strands simultaneously in an ATP-dependent manner. This is DNA gyrase subunit B from Myxococcus xanthus.